The primary structure comprises 1028 residues: Pentatricopeptide repeat-containing protein At3g09040, mitochondrial (1028 aa).

Residues 1-30 (MYFRVLLTPSSAMFDSFSFVRRLSYSPDLG) constitute a mitochondrion transit peptide. PPR repeat units follow at residues 94 to 123 (EGRL…FLEK), 124 to 158 (DVTA…QIFP), 159 to 193 (NKFT…GLER), 194 to 224 (NSYC…IVDP), 225 to 259 (NTVC…GHRP), 260 to 290 (DHLA…MSSP), 291 to 325 (DVVA…SVKS), 326 to 360 (TRST…GLAS), 361 to 391 (NIYV…LEEK), 392 to 426 (NDVF…GYNI), 427 to 461 (DDFT…KLAK), 462 to 492 (NLFV…MCDR), 493 to 527 (DNVT…GIVS), 528 to 562 (DGAC…GLDR), 563 to 593 (DLHT…LPEW), 594 to 627 (SVVS…GVNP), 628 to 662 (SEIT…GFSS), 664 to 694 (GEYL…LSSP), 696 to 730 (SIVL…GVLP), 731 to 765 (DQAT…AHDL), 766 to 796 (DELT…MRRR), 798 to 832 (NVVS…HIMP), 833 to 863 (DEIT…MIGQ), and 869 to 899 (RVDH…QNLK). The segment at 904 to 979 (LWSSLLGACR…VPGYSWIDVE (76 aa)) is type E motif. Residues 980–1010 (QRTHIFAAGDKSHSEIGKIEMFLEDLYDLMK) are type E(+) motif.

The protein belongs to the PPR family. PCMP-E subfamily.

The protein resides in the mitochondrion. The chain is Pentatricopeptide repeat-containing protein At3g09040, mitochondrial (PCMP-E88) from Arabidopsis thaliana (Mouse-ear cress).